A 258-amino-acid polypeptide reads, in one-letter code: L-2,3-butanediol dehydrogenase (258 aa).

NAD(+)-binding positions include 12 to 14 (QGI), aspartate 33, glutamine 37, 61 to 62 (DV), asparagine 88, tyrosine 154, lysine 158, and 184 to 189 (PGIVGT). Tyrosine 154 functions as the Proton acceptor in the catalytic mechanism.

This sequence belongs to the short-chain dehydrogenases/reductases (SDR) family. Homotetramer.

The catalysed reaction is (S,S)-butane-2,3-diol + NAD(+) = (S)-acetoin + NADH + H(+). It catalyses the reaction (S)-acetoin + NAD(+) = diacetyl + NADH + H(+). Slightly activated by Ba(2+), Ca(2+), Mn(2+), Mg(2+), and Co(2+), while Hg(2+) and Cu(2+) cause marked inhibition of the activity. Ni(2+), Zn(2+) and Cd(2+) have no effect on the catalytic activity. Is also slightly inhibited by lactate, pyruvate, succinate, acetate and formate. In terms of biological role, catalyzes the reversible reduction of (S)-acetoin to (S,S)-butane-2,3-diol (L-BD) in the presence of NADH. To a lesser extent, can also catalyze the irreversible reduction of diacetyl to (S)-acetoin. Cannot oxidize meso-BD, D-BD, 2-butanol, 1,2-propanediol, ethanol, acetol, 1,2-butanediol, 1,3-butanediol, n-butanol, and n-propanol. Cannot reduce (R)-acetoin, acetol, dihydroxyacetone and 2,4-pentanedione. The chain is L-2,3-butanediol dehydrogenase from Corynebacterium glutamicum (Brevibacterium saccharolyticum).